Reading from the N-terminus, the 432-residue chain is 23S rRNA (uracil(1939)-C(5))-methyltransferase RlmD (432 aa).

A TRAM domain is found at Arg10–Lys68. [4Fe-4S] cluster contacts are provided by Cys81, Cys87, Cys90, and Cys162. 6 residues coordinate S-adenosyl-L-methionine: Gln265, Phe294, Asn299, Glu315, Asn342, and Asp363. The Nucleophile role is filled by Cys389.

The protein belongs to the class I-like SAM-binding methyltransferase superfamily. RNA M5U methyltransferase family. RlmD subfamily.

The catalysed reaction is uridine(1939) in 23S rRNA + S-adenosyl-L-methionine = 5-methyluridine(1939) in 23S rRNA + S-adenosyl-L-homocysteine + H(+). Functionally, catalyzes the formation of 5-methyl-uridine at position 1939 (m5U1939) in 23S rRNA. In Cronobacter sakazakii (strain ATCC BAA-894) (Enterobacter sakazakii), this protein is 23S rRNA (uracil(1939)-C(5))-methyltransferase RlmD.